We begin with the raw amino-acid sequence, 121 residues long: Phosphoribosyl-AMP cyclohydrolase (121 aa).

Residue Asp76 participates in Mg(2+) binding. Cys77 is a Zn(2+) binding site. Mg(2+)-binding residues include Asp78 and Asp80. Zn(2+) is bound by residues Cys93 and Cys100.

It belongs to the PRA-CH family. Homodimer. Mg(2+) serves as cofactor. It depends on Zn(2+) as a cofactor.

The protein localises to the cytoplasm. It catalyses the reaction 1-(5-phospho-beta-D-ribosyl)-5'-AMP + H2O = 1-(5-phospho-beta-D-ribosyl)-5-[(5-phospho-beta-D-ribosylamino)methylideneamino]imidazole-4-carboxamide. The protein operates within amino-acid biosynthesis; L-histidine biosynthesis; L-histidine from 5-phospho-alpha-D-ribose 1-diphosphate: step 3/9. Functionally, catalyzes the hydrolysis of the adenine ring of phosphoribosyl-AMP. The protein is Phosphoribosyl-AMP cyclohydrolase of Methanococcoides burtonii (strain DSM 6242 / NBRC 107633 / OCM 468 / ACE-M).